Here is a 132-residue protein sequence, read N- to C-terminus: Translation initiation factor 5A (132 aa).

Lysine 36 carries the post-translational modification Hypusine.

The protein belongs to the eIF-5A family.

The protein localises to the cytoplasm. In terms of biological role, functions by promoting the formation of the first peptide bond. This Pyrobaculum islandicum (strain DSM 4184 / JCM 9189 / GEO3) protein is Translation initiation factor 5A (eIF5A).